A 950-amino-acid polypeptide reads, in one-letter code: MSDKKRINQIAKETGLSNTELVATAQSLGFEVKSHSRSVTAEQAEKIIQGVKTGTDTIVKPAEKTVKAKTKTVPETAKSKQEDHPRTFAGKAVVEDPAILARIKEKEEAKKAAKTEAEPIEEVITTEKPKVAEPVKKSEPKAAAKAEETKVEKVEAKAKTVTPKAEVKTENVADKKEPVVTEEKKKSLTQKPRIQIKVIKRAEDIKKEQAAARPEKKKFDKNRNDRNNRNDNRRPNQNGNGQGHSQGGNHYDKNRPAGQGQNQGQKRDKFASSGSSSTSDTFTPAASGKNNRRDRDRKKTDSNRDNTKDGNRKGGPLRVNDNRNQVRNARNSNWNQKGGRGRYQNNQSSNVPATQRKFHELPESLEYEVGMNVQDIAKSIKREPAEIIKKLFMMGTMVNQNQSLDEDTIELILMDYGVTPLKKVEEDKSDIERLFVEDGYLNEDKMVERPAVVTIMGHVDHGKTTLLDRFRESRVTEGEAGGITQHIGAYQIKTNGKKITFLDTPGHEAFTSMRARGASVTDITILVVAADDGVMPQTIEAINHSKAAGVPIIVAINKIDKPGANPQRVTQELTEHGVFPVAWDPENGSEFVEISAKFNQNLEELLDTVLLVAEVQELKADPSVRAIGTVVEARLDQGKGAIATLLVQQGTLHIQDPIVVGNTYGRVRTMTNDLGRRIKEAGPSTPIELTGLSDVPQAGDHFAVFEDEKAARAAGEERAKRAQLIKRQNTRRVNLDNLFDTLKEGQTKSVNIIIKADVQGSAEALAASLQKIEVEGVKVDIVHSAVGAISESDISLAAASNAIIIGFNVRPTGLAREQAAQEEVDIRLHSIIYKVIEEVETAMRGMLDPEFKEEIIGEAIVRETFNVSKVGTIAGFMVIRGKVTRDASVRVIREGVVIHDGAIASLKHFKDDVKEVGNAQEGGLMVEDFNDVEIDDTFEVYKMVEIERKK.

Disordered regions lie at residues Lys69–Ala92 and Lys128–Pro352. Composition is skewed to basic and acidic residues over residues Ala77 to Arg86, Lys128 to Ala158, Ala165 to Lys186, Lys200 to Arg234, and Asn291 to Arg312. Composition is skewed to polar residues over residues Asn322–Gln336 and Tyr343–Pro352. The tr-type G domain occupies Glu448–Lys619. The G1 stretch occupies residues Gly457–Thr464. GTP is bound at residue Gly457–Thr464. Residues Gly482 to His486 form a G2 region. A G3 region spans residues Asp503–Gly506. GTP contacts are provided by residues Asp503 to His507 and Asn557 to Asp560. A G4 region spans residues Asn557–Asp560. The tract at residues Ser595–Lys597 is G5.

The protein belongs to the TRAFAC class translation factor GTPase superfamily. Classic translation factor GTPase family. IF-2 subfamily.

It is found in the cytoplasm. Its function is as follows. One of the essential components for the initiation of protein synthesis. Protects formylmethionyl-tRNA from spontaneous hydrolysis and promotes its binding to the 30S ribosomal subunits. Also involved in the hydrolysis of GTP during the formation of the 70S ribosomal complex. This is Translation initiation factor IF-2 from Lactococcus lactis subsp. cremoris (strain SK11).